Reading from the N-terminus, the 1255-residue chain is Pre-mRNA-splicing factor ATP-dependent RNA helicase DEAH7 (1255 aa).

The segment at 1 to 316 is disordered; that stretch reads MGVDPFKTTE…SDEDRSQGAE (316 aa). The span at 13–60 shows a compositional bias: basic and acidic residues; sequence EADKETNGGVPVKDKLTFKAPERKSRLGLDARAIEKKDNAKTEGEFKV. Residues 109–137 show a composition bias toward polar residues; sequence AQESTVTTENAGTSDISITPRTLSCTSSY. Short sequence motifs (nuclear localization signal) lie at residues 144–153 and 172–191; these read RHREEHRRDR and RRRE…KRRR. The span at 144–219 shows a compositional bias: basic and acidic residues; that stretch reads RHREEHRRDR…EWERSPHGDR (76 aa). 2 stretches are compositionally biased toward low complexity: residues 220-240 and 271-290; these read GSSY…AASP and PIRA…GGRS. Basic and acidic residues predominate over residues 297 to 316; that stretch reads REGDLTNEGHSDEDRSQGAE. A Helicase ATP-binding domain is found at 568 to 731; it reads LQVIRENQVI…FGSVPIFNIP (164 aa). 581–588 contacts ATP; it reads GETGSGKT. Residues 678-681 carry the DEAH box motif; that stretch reads DEAH. Residues 753-933 form the Helicase C-terminal domain; the sequence is AVKQAMTIHI…NVVLLLKSLK (181 aa). The segment covering 1190–1224 has biased composition (basic and acidic residues); that stretch reads LEHKKKQKEEKSGMEEEMEKLRRDQVESELRSKER. A disordered region spans residues 1190–1255; sequence LEHKKKQKEE…TFLRPKKLGL (66 aa).

Belongs to the DEAD box helicase family. DEAH subfamily. PRP16 sub-subfamily. As to quaternary structure, interacts with the Phytophthora PSR1 protein.

The protein resides in the nucleus. The enzyme catalyses ATP + H2O = ADP + phosphate + H(+). In terms of biological role, involved in pre-mRNA splicing by mediating structural transitions of the spliceosome during the catalytic step. Facilitates expression of genes involved in auxin-mediated development including male-gametophyte transmission, apical-basal patterning of embryonic and gynoecium development, stamen development, phyllotactic flower positioning, and vascular development. Also involved in root-meristem maintenance and planar polarity of root-hair positioning. Acts as a component of RNA silencing that regulates distinct classes of endogenous small RNAs. Functions as a positive regulator of plant immunity. In Arabidopsis thaliana (Mouse-ear cress), this protein is Pre-mRNA-splicing factor ATP-dependent RNA helicase DEAH7.